Reading from the N-terminus, the 80-residue chain is Defensin-like protein 276 (80 aa).

A signal peptide spans 1 to 24 (MSGQKYQLVSLLLIICLLFSQSTA). Intrachain disulfides connect Cys27–Cys67, Cys33–Cys55, Cys39–Cys65, and Cys43–Cys66.

This sequence belongs to the DEFL family.

The protein resides in the secreted. The chain is Defensin-like protein 276 from Arabidopsis thaliana (Mouse-ear cress).